We begin with the raw amino-acid sequence, 190 residues long: Large ribosomal subunit protein uL10 (190 aa).

Residues 170 to 190 (AAGAPAEAAPVEAPAAETVDA) are disordered.

It belongs to the universal ribosomal protein uL10 family. In terms of assembly, part of the ribosomal stalk of the 50S ribosomal subunit. The N-terminus interacts with L11 and the large rRNA to form the base of the stalk. The C-terminus forms an elongated spine to which L12 dimers bind in a sequential fashion forming a multimeric L10(L12)X complex.

In terms of biological role, forms part of the ribosomal stalk, playing a central role in the interaction of the ribosome with GTP-bound translation factors. This chain is Large ribosomal subunit protein uL10, found in Kineococcus radiotolerans (strain ATCC BAA-149 / DSM 14245 / SRS30216).